The sequence spans 675 residues: Protein PALS1 (675 aa).

Disordered stretches follow at residues Met1–Glu34 and Arg51–Glu78. Residues Met1 to Glu345 are required for the correct localization of PALS1 and PATJ at cell-cell contacts and the normal formation of tight junctions and adherens junctions. 2 stretches are compositionally biased toward basic and acidic residues: residues Val10–Glu34 and Ala54–Glu78. Ser14 and Ser25 each carry phosphoserine. The interaction with PARD6B stretch occupies residues Val21 to Asp140. 2 positions are modified to phosphoserine: Ser83 and Ser84. L27 domains follow at residues Lys120 to Ser177 and Pro179 to Glu235. The interaction with LIN7C stretch occupies residues Pro181–Tyr243. Positions Ile256 to Gln336 constitute a PDZ domain. Residues Glu345–Glu417 form the SH3 domain. The region spanning Lys479–Asn660 is the Guanylate kinase-like domain. An ATP-binding site is contributed by Gly486–Asn493.

This sequence belongs to the MAGUK family. Heterodimer with MPP1. Forms a heterotrimeric complex composed of PALS1, LIN7B and PATJ; the N-terminal L27 domain of PALS1 interacts with the L27 domain of PATJ and the C-terminal L27 domain of PALS1 interacts with the L27 domain of LIN7B. Component of a complex composed of PALS1, CRB1 and MPP4. Component of a complex whose core is composed of ARHGAP17, AMOT, PALS1, PATJ and PARD3/PAR3. Component of a complex composed of PALS1, CRB1 and EPB41L5. Within the complex, interacts (via HOOK domain) with EPB41L5 (via FERM domain), and interacts with CRB1 (via intracellular domain). Component of a complex composed of PALS1, MPP3 and CRB1; PALS1 acts as a bridging protein between MPP3 (via guanylate kinase-like domain) and CRB1. Component of a complex composed of CRB3, PALS1 and PATJ. As part of the Crumbs complex; interacts with WWP1, the interaction is enhanced by AMOTL2 and facilitates WWP1 localization to the plasma membrane. The Crumbs complex promotes monoubiquitination of AMOTL2 by WWP1, which activates the Hippo signaling pathway. Interacts (via PDZ domain) with PATJ (via N-terminus). Interacts with EZR. Interacts (via PDZ domain) with CRB1 (via C-terminal ERLI motif). While the PDZ domain is sufficient for interaction with CRB1, the adjacent SH3 and guanylate kinase-like domains are likely to contribute to a high affinity interaction. Interacts with WWTR1/TAZ (via WW domain). Interacts with MPP7. Interacts (via PDZ domain) with CRB3 (via C-terminus). Interacts with LIN7C. Interacts with MPDZ. Interacts with PARD6B. Interacts with SC6A1. Interacts with CDH5; the interaction promotes PALS1 localization to cell junctions and is required for CDH5-mediated vascular lumen formation and endothelial cell. Interacts with NPHP1 (via coiled coil and SH3 domains). Interacts with NPHP4. Interacts with CRB2. In terms of assembly, (Microbial infection) Interacts (via PDZ domain) with human coronaviruses SARS-CoV and, probably, SARS-CoV-2 envelope small membrane protein E (via C-terminus); this inhibits the interaction between PALS1 and CRB3. Expressed at the outer limiting membrane in the retina (at protein level). Expressed in T lymphocytes (at protein level). Expressed in the kidney (at protein level).

Its subcellular location is the golgi apparatus. It localises to the cell membrane. It is found in the endomembrane system. The protein localises to the cell junction. The protein resides in the tight junction. Its subcellular location is the adherens junction. It localises to the cell projection. It is found in the axon. The protein localises to the perikaryon. The protein resides in the apical cell membrane. Its subcellular location is the endoplasmic reticulum-Golgi intermediate compartment. In terms of biological role, plays a role in tight junction biogenesis and in the establishment of cell polarity in epithelial cells. Also involved in adherens junction biogenesis by ensuring correct localization of the exocyst complex protein EXOC4/SEC8 which allows trafficking of adherens junction structural component CDH1 to the cell surface. Plays a role through its interaction with CDH5 in vascular lumen formation and endothelial membrane polarity. Required during embryonic and postnatal retinal development. Required for the maintenance of cerebellar progenitor cells in an undifferentiated proliferative state, preventing premature differentiation, and is required for cerebellar histogenesis, fissure formation, cerebellar layer organization and cortical development. Plays a role in neuronal progenitor cell survival, potentially via promotion of mTOR signaling. Plays a role in the radial and longitudinal extension of the myelin sheath in Schwann cells. May modulate SC6A1/GAT1-mediated GABA uptake by stabilizing the transporter. Plays a role in the T-cell receptor-mediated activation of NF-kappa-B. Required for localization of EZR to the apical membrane of parietal cells and may play a role in the dynamic remodeling of the apical cytoskeleton. Required for the normal polarized localization of the vesicular marker STX4. Required for the correct trafficking of the myelin proteins PMP22 and MAG. Involved in promoting phosphorylation and cytoplasmic retention of transcriptional coactivators YAP1 and WWTR1/TAZ which leads to suppression of TGFB1-dependent transcription of target genes such as CCN2/CTGF, SERPINE1/PAI1, SNAI1/SNAIL1 and SMAD7. (Microbial infection) Acts as an interaction partner for human coronaviruses SARS-CoV and, probably, SARS-CoV-2 envelope protein E which results in delayed formation of tight junctions and disregulation of cell polarity. The protein is Protein PALS1 of Homo sapiens (Human).